Consider the following 183-residue polypeptide: Ribose 1,5-bisphosphate phosphokinase PhnN (183 aa).

This sequence belongs to the ribose 1,5-bisphosphokinase family.

It catalyses the reaction alpha-D-ribose 1,5-bisphosphate + ATP = 5-phospho-alpha-D-ribose 1-diphosphate + ADP. It participates in metabolic intermediate biosynthesis; 5-phospho-alpha-D-ribose 1-diphosphate biosynthesis; 5-phospho-alpha-D-ribose 1-diphosphate from D-ribose 5-phosphate (route II): step 3/3. Its function is as follows. Catalyzes the phosphorylation of ribose 1,5-bisphosphate to 5-phospho-D-ribosyl alpha-1-diphosphate (PRPP). In Azotobacter vinelandii (strain DJ / ATCC BAA-1303), this protein is Ribose 1,5-bisphosphate phosphokinase PhnN.